The primary structure comprises 44 residues: uncharacterized protein (44 aa).

A helical transmembrane segment spans residues 4–24; sequence ISSILIRGGGVLIVVILLLWI.

It localises to the membrane. This is an uncharacterized protein from Ornithodoros (relapsing fever ticks).